The sequence spans 1374 residues: MAQQTFTGRKRVRKFFGHIREVAEMPNLIEVQKASYDQFLMVAEPPGGRDDEGLQAVFRSVFPISDFSNASMLEFVRYEFEPPKYDVDECRQRGMTYAAPLKVTLRLIVFDIDEETGARSVKDIKEQDVYMGDIPLMTMNGTFVVNGTERVIVSQMHRSPGVFFDHDKGKTHSSGKLLFAARVIPYRGSWLDIEFDAKDIVFARIDRRRKIPVTSLMFALGLDGEEILSTFYKKILYKRIKEGWRVPFDANRFRGYSTVNDLIDADTGKVVLEAGKKLTVRAARQLQEKGLKALRLSDEELVGNYLAEDLVNPKTGEIYAEAGEEITEKSLKALNEEGYKELPLLDIDHVNIGPYIRNTLSADKNMTREDALFDIYRVMRPGEPPTLDSAQNMFQSLFFDSERYDLSAVGRVKMNMRLDLDAPDTHRTLRKEDILAVIKTLVGLRDGKGEIDDIDHLGNRRVRSVGELMENQYRIGLLRMERAIKERMSSVDIDTVMPQDLINAKPAAAAVREFFGSSQLSQFMDQTNPLSEITHKRRLSALGPGGLTRERAGFEVRDVHPTHYGRICPIETPEGPNIGLINSLATFARVNKYGFVETPYRKVKEGRVTDEVVYLSAMEEGRYAVAQANISLDAKGRFTDDLIVCRAGGTRDVVLIPADQVDYMDVSPKQLVSVAAALIPFLENDDANRALMGSNMQRQAVPLVRAEAPFVGTGMEGVVARDSGAAIAARRTGVIDQIDATRIVIRATEDLDPTKSGVDIYRLMKYQRSNQSTCINQRPLVKVGDSVAKGDIIADGPSTDLGELALGRNVLVAFMPWNGYNFEDSILLSERIVKEDVFTSIHIEEFEVMARDTKLGPEEITRDIPNVSEEALKNLDEAGIVYIGAEVRAGDILVGKITPKGESPMTPEEKLLRAIFGEKASDVRDTSLRVPPGVQGTIVEVRVFNRHGVDKDERALAIEREEIERLAKDRDDEQAILDRNVYGRLADLLDNRQGVSGPKGFKKDTKITRAVLEEYPKSQWWLFAAPNDKLMAEIEAMRKQYDESKKGLEQRFLDKVEKLQRGDELPPGVMKMVKVFVAVKRKIQPGDKMAGRHGNKGVVSKIVPIEDMPFLEDGTHADIVLNPLGVPSRMNVGQILETHLGWACAGMGKKIGQTIDAYYQRQDLKPLRETLKKIYGDDETIKSLNDGELIELGRNLSHGVPIATPVFDGAKEADIEEMLKLAGFDASGQSTVYDGRTGDEFDRKVTVGYIYMLKLHHLVDDKIHARSIGPYSLVTQQPLGGKAQFGGQRFGEMEVWALEAYGAAYTLQEMLTVKSDDVAGRTKVYEAIVRGDDTFEAGIPESFNVLVKEMRSLGLNVDLHNSKLGVPPPAEAAE.

The protein belongs to the RNA polymerase beta chain family. The RNAP catalytic core consists of 2 alpha, 1 beta, 1 beta' and 1 omega subunit. When a sigma factor is associated with the core the holoenzyme is formed, which can initiate transcription.

The enzyme catalyses RNA(n) + a ribonucleoside 5'-triphosphate = RNA(n+1) + diphosphate. DNA-dependent RNA polymerase catalyzes the transcription of DNA into RNA using the four ribonucleoside triphosphates as substrates. This chain is DNA-directed RNA polymerase subunit beta, found in Rhodopseudomonas palustris (strain BisB5).